Consider the following 340-residue polypeptide: MSLTITKDNIFPKGYRGRLTEGVTYDERNNTLLWVDIIQGEVHRVFLDNTNINTNTSSSSHETLKWDSSNESIGAICLTNDPNKLIICSKYGLAYGDFSSSTIEYFFKYPHTTNPDEKLRLRSNDGIIDPWGNLWIGVMNDFPIGAKEGIQPEGKLYRIGFSKESNKLTCDVMIENSLISNGLCFNNQGDEFYWTDSLTFKIWKYDYDKTTNKLTNKSVFIDLKQFYPDVEQPEPDGLVMTNNGEIYTCVFSTGTILHVDNQGKEIERIKIAAKRPTCVTIGSGIKNNEMFVTTGHLKLDDEKATIDAINLDGDLGGFLFKLKVDKDLNGQKKNIWGGKV.

It belongs to the SMP-30/CGR1 family.

In terms of biological role, involved in the cell growth regulation. In Candida albicans (strain SC5314 / ATCC MYA-2876) (Yeast), this protein is Cell growth-regulated gene 1 protein (CGR1).